The primary structure comprises 843 residues: Pentatricopeptide repeat-containing protein At4g21880, mitochondrial (843 aa).

PPR repeat units lie at residues 392 to 426, 427 to 461, 462 to 496, 497 to 531, 532 to 562, 564 to 594, and 598 to 632; these read SSTSYENLVSYLCGSNEVVTALDIVENMCEAGLVI, SANILHSLLQAIEQILEFNLVQRIYSIMSNKSVKP, NSETFRKSINLCIRIKDFEGAYNMLGNLKNFNLAP, NSSMYNSIMAGYFREKKVNSALKVLKEMKEADVKP, DSVTFSYLINYCGEEATIAKYYKEMKQAGVE, NKHVYMSLVKAYASCGQFEKAKQVLMDLEVP, and HNELKSVLISALASNGNITEALSIYEEMKKLRCPV.

Belongs to the PPR family. P subfamily.

It is found in the mitochondrion. The chain is Pentatricopeptide repeat-containing protein At4g21880, mitochondrial from Arabidopsis thaliana (Mouse-ear cress).